Here is a 238-residue protein sequence, read N- to C-terminus: Ribonuclease HII (238 aa).

Residues 12–197 (GIVAGVDEAG…VLELLTDDLL (186 aa)) form the RNase H type-2 domain. Asp18, Glu19, and Asp107 together coordinate a divalent metal cation.

It belongs to the RNase HII family. It depends on Mn(2+) as a cofactor. Mg(2+) serves as cofactor.

It localises to the cytoplasm. It catalyses the reaction Endonucleolytic cleavage to 5'-phosphomonoester.. Functionally, endonuclease that specifically degrades the RNA of RNA-DNA hybrids. The polypeptide is Ribonuclease HII (rnhB) (Thermotoga maritima (strain ATCC 43589 / DSM 3109 / JCM 10099 / NBRC 100826 / MSB8)).